We begin with the raw amino-acid sequence, 193 residues long: Potassium-transporting ATPase KdpC subunit (193 aa).

The chain crosses the membrane as a helical span at residues 7-27 (PLVVIFAVLTVVTGMAYPAVM).

The protein belongs to the KdpC family. As to quaternary structure, the system is composed of three essential subunits: KdpA, KdpB and KdpC.

The protein localises to the cell inner membrane. Its function is as follows. Part of the high-affinity ATP-driven potassium transport (or Kdp) system, which catalyzes the hydrolysis of ATP coupled with the electrogenic transport of potassium into the cytoplasm. This subunit acts as a catalytic chaperone that increases the ATP-binding affinity of the ATP-hydrolyzing subunit KdpB by the formation of a transient KdpB/KdpC/ATP ternary complex. This chain is Potassium-transporting ATPase KdpC subunit, found in Burkholderia vietnamiensis (strain G4 / LMG 22486) (Burkholderia cepacia (strain R1808)).